The sequence spans 702 residues: Phosphate acetyltransferase (702 aa).

The segment at 375 to 702 (AFRYELIQRA…QATQSAADCG (328 aa)) is phosphate acetyltransferase.

It in the N-terminal section; belongs to the CobB/CobQ family. In the C-terminal section; belongs to the phosphate acetyltransferase and butyryltransferase family. As to quaternary structure, homohexamer.

It is found in the cytoplasm. The enzyme catalyses acetyl-CoA + phosphate = acetyl phosphate + CoA. Its pathway is metabolic intermediate biosynthesis; acetyl-CoA biosynthesis; acetyl-CoA from acetate: step 2/2. Its function is as follows. Involved in acetate metabolism. This chain is Phosphate acetyltransferase (pta), found in Deinococcus radiodurans (strain ATCC 13939 / DSM 20539 / JCM 16871 / CCUG 27074 / LMG 4051 / NBRC 15346 / NCIMB 9279 / VKM B-1422 / R1).